We begin with the raw amino-acid sequence, 122 residues long: Large ribosomal subunit protein uL14 (122 aa).

The protein belongs to the universal ribosomal protein uL14 family. Part of the 50S ribosomal subunit. Forms a cluster with proteins L3 and L19. In the 70S ribosome, L14 and L19 interact and together make contacts with the 16S rRNA in bridges B5 and B8.

In terms of biological role, binds to 23S rRNA. Forms part of two intersubunit bridges in the 70S ribosome. The chain is Large ribosomal subunit protein uL14 from Staphylococcus aureus (strain MW2).